Consider the following 339-residue polypeptide: Tetraacyldisaccharide 4'-kinase (339 aa).

53–60 (TCGGAGKT) is an ATP binding site.

Belongs to the LpxK family.

It carries out the reaction a lipid A disaccharide + ATP = a lipid IVA + ADP + H(+). It participates in glycolipid biosynthesis; lipid IV(A) biosynthesis; lipid IV(A) from (3R)-3-hydroxytetradecanoyl-[acyl-carrier-protein] and UDP-N-acetyl-alpha-D-glucosamine: step 6/6. Functionally, transfers the gamma-phosphate of ATP to the 4'-position of a tetraacyldisaccharide 1-phosphate intermediate (termed DS-1-P) to form tetraacyldisaccharide 1,4'-bis-phosphate (lipid IVA). The polypeptide is Tetraacyldisaccharide 4'-kinase (Bartonella henselae (strain ATCC 49882 / DSM 28221 / CCUG 30454 / Houston 1) (Rochalimaea henselae)).